A 266-amino-acid chain; its full sequence is Prolactin-7A1 (266 aa).

An N-terminal signal peptide occupies residues Met-1 to Cys-30. Residues Asn-36, Asn-58, Asn-110, Asn-149, and Asn-157 are each glycosylated (N-linked (GlcNAc...) asparagine). Intrachain disulfides connect Cys-114-Cys-231 and Cys-248-Cys-257.

The protein belongs to the somatotropin/prolactin family. Expressed specifically in the placenta. Detected only in the trophoblast giant cells.

The protein resides in the secreted. In Mus musculus (Mouse), this protein is Prolactin-7A1 (Prl7a1).